Here is a 341-residue protein sequence, read N- to C-terminus: Anthranilate phosphoribosyltransferase (341 aa).

Residues G85, 88-89 (GD), T93, 95-98 (NIST), 113-121 (KHGNRSASG), and S125 contribute to the 5-phospho-alpha-D-ribose 1-diphosphate site. G85 serves as a coordination point for anthranilate. Mg(2+) is bound at residue S97. N116 is a binding site for anthranilate. An anthranilate-binding site is contributed by R171. Residues D230 and E231 each contribute to the Mg(2+) site.

The protein belongs to the anthranilate phosphoribosyltransferase family. Homodimer. The cofactor is Mg(2+).

It catalyses the reaction N-(5-phospho-beta-D-ribosyl)anthranilate + diphosphate = 5-phospho-alpha-D-ribose 1-diphosphate + anthranilate. It functions in the pathway amino-acid biosynthesis; L-tryptophan biosynthesis; L-tryptophan from chorismate: step 2/5. Catalyzes the transfer of the phosphoribosyl group of 5-phosphorylribose-1-pyrophosphate (PRPP) to anthranilate to yield N-(5'-phosphoribosyl)-anthranilate (PRA). The sequence is that of Anthranilate phosphoribosyltransferase from Prochlorococcus marinus (strain SARG / CCMP1375 / SS120).